The primary structure comprises 216 residues: Protein Syd (216 aa).

Belongs to the Syd family.

Its subcellular location is the cell inner membrane. Its function is as follows. Interacts with the SecY protein in vivo. May bind preferentially to an uncomplexed state of SecY, thus functioning either as a chelating agent for excess SecY in the cell or as a regulatory factor that negatively controls the translocase function. This is Protein Syd from Shewanella putrefaciens (strain CN-32 / ATCC BAA-453).